The sequence spans 516 residues: MASWSAPSPSLVEYFEGQTSFQCGYCKNKLGSRSYGMWAHSMTVQDYQDLIDRGWRRSGKYVYKPVMDQTCCPQYTIRCHPLQFQPSKSHKKVLKKMLKFLAKGEISKGNCEDEPMDSTVEDAVDGDFALINKLDIKCDLKTLSDLKGSIESEEKEKEKSIKKEGSKEFIHPQSIEEKLGSGEPSHPIKVHIGPKPGKGADLSKPPCRKAREMRKERQRLKRMQQASAAASEAQGQPVCLLPKAKSNQPKSLEDLIFQSLPENASHKLEVRVVRSSPPSPQFRATFQESYQVYKRYQMVVHKDPPDKPTVSQFTRFLCSSPLEAEHPADGPECGYGSFHQQYWLDGKIIAVGVLDILPYCVSSVYLYYDPDYSFLSLGVYSALREIAFTRQLHEKTSQLSYYYMGFYIHSCPKMRYKGQYRPSDLLCPETYVWVPIEQCLPSLDNSKYCRFNQDPEAEDEGRSKELDRLRVFHRRSAMPYGVYKNHQEDPSEEAGVLEYANLVGQKCSERMLLFRH.

Over residues 150-180 the composition is skewed to basic and acidic residues; that stretch reads IESEEKEKEKSIKKEGSKEFIHPQSIEEKLG. Residues 150-206 form a disordered region; that stretch reads IESEEKEKEKSIKKEGSKEFIHPQSIEEKLGSGEPSHPIKVHIGPKPGKGADLSKPP.

Belongs to the R-transferase family. Monomer. Interacts with LIAT1; LIAT1 is not a substrate of ATE1, the interaction takes place in the cytoplasm and seems to increase ATE1 arginyltransferase activity. As to quaternary structure, interacts with LIAT1; has a higher affinity than the other isoforms. Widely expressed.

The protein resides in the nucleus. It is found in the cytoplasm. It catalyses the reaction an N-terminal L-alpha-aminoacyl-[protein] + L-arginyl-tRNA(Arg) = an N-terminal L-arginyl-L-aminoacyl-[protein] + tRNA(Arg) + H(+). Functionally, involved in the post-translational conjugation of arginine to the N-terminal aspartate or glutamate of a protein. This arginylation is required for degradation of the protein via the ubiquitin pathway. Does not arginylate cysteine residues. This is Arginyl-tRNA--protein transferase 1 from Mus musculus (Mouse).